The following is a 321-amino-acid chain: MSKPIVMERGVKYRDADKMALIPVKNVVTEREALLRKPEWMKIKLPADSSRIQGIKAAMRKNGLHSVCEEASCPNLAECFNHGTATFMILGAICTRRCPFCDVAHGRPVAPDANEPLKLAQTIADMALRYVVITSVDRDDLRDGGAQHFADCISAIREKSPSIKIETLVPDFRGRMDRALEILTATPPDVFNHNLENVPRVYRQVRPGADYNWSLKLLERFKEAHPHIPTKSGLMVGLGETNAEIIEVMRDLRRHGVTMLTLGQYLQPSRHHLPVQRYVSPDEFDEMKAEAMAMGFTHAACGPFVRSSYHADMQAKGEEVK.

Positions 68, 73, 79, 94, 98, 101, and 308 each coordinate [4Fe-4S] cluster. Residues 80 to 297 (FNHGTATFMI…KAEAMAMGFT (218 aa)) enclose the Radical SAM core domain.

Belongs to the radical SAM superfamily. Lipoyl synthase family. It depends on [4Fe-4S] cluster as a cofactor.

Its subcellular location is the cytoplasm. It catalyses the reaction [[Fe-S] cluster scaffold protein carrying a second [4Fe-4S](2+) cluster] + N(6)-octanoyl-L-lysyl-[protein] + 2 oxidized [2Fe-2S]-[ferredoxin] + 2 S-adenosyl-L-methionine + 4 H(+) = [[Fe-S] cluster scaffold protein] + N(6)-[(R)-dihydrolipoyl]-L-lysyl-[protein] + 4 Fe(3+) + 2 hydrogen sulfide + 2 5'-deoxyadenosine + 2 L-methionine + 2 reduced [2Fe-2S]-[ferredoxin]. It functions in the pathway protein modification; protein lipoylation via endogenous pathway; protein N(6)-(lipoyl)lysine from octanoyl-[acyl-carrier-protein]: step 2/2. In terms of biological role, catalyzes the radical-mediated insertion of two sulfur atoms into the C-6 and C-8 positions of the octanoyl moiety bound to the lipoyl domains of lipoate-dependent enzymes, thereby converting the octanoylated domains into lipoylated derivatives. The protein is Lipoyl synthase of Enterobacter sp. (strain 638).